The following is a 276-amino-acid chain: Sulfur carrier protein FdhD (276 aa).

Cysteine 118 functions as the Cysteine persulfide intermediate in the catalytic mechanism.

The protein belongs to the FdhD family.

It localises to the cytoplasm. In terms of biological role, required for formate dehydrogenase (FDH) activity. Acts as a sulfur carrier protein that transfers sulfur from IscS to the molybdenum cofactor prior to its insertion into FDH. In Mycobacterium bovis (strain ATCC BAA-935 / AF2122/97), this protein is Sulfur carrier protein FdhD.